A 253-amino-acid polypeptide reads, in one-letter code: MDQTDQTTHFGFRDVPLGEKQTLVNDVFHSVAQRYDLMNDLMSAGLHRVWKDIMINTLNPPKSDAPFALLDVAGGTGDISFRAARKAGAGFHATVCDINGDMLEVGRQRALKQYLEDKVSFVEGNAEKLAFPDRSFDAYTIAFGIRNVPQIELALAEAYRVLKHGGRFLCLEFSTVEVPGLDKLYDLFSFNVIPQLGRAVTGDAESYRYLVESIRQFPRPNAFAEMISAAGFSRVSWQTLSGGIVALHSGWRL.

Residues T76, D97, and 125–126 (NA) each bind S-adenosyl-L-methionine.

This sequence belongs to the class I-like SAM-binding methyltransferase superfamily. MenG/UbiE family.

The enzyme catalyses a 2-demethylmenaquinol + S-adenosyl-L-methionine = a menaquinol + S-adenosyl-L-homocysteine + H(+). It catalyses the reaction a 2-methoxy-6-(all-trans-polyprenyl)benzene-1,4-diol + S-adenosyl-L-methionine = a 5-methoxy-2-methyl-3-(all-trans-polyprenyl)benzene-1,4-diol + S-adenosyl-L-homocysteine + H(+). The protein operates within quinol/quinone metabolism; menaquinone biosynthesis; menaquinol from 1,4-dihydroxy-2-naphthoate: step 2/2. It functions in the pathway cofactor biosynthesis; ubiquinone biosynthesis. Methyltransferase required for the conversion of demethylmenaquinol (DMKH2) to menaquinol (MKH2) and the conversion of 2-polyprenyl-6-methoxy-1,4-benzoquinol (DDMQH2) to 2-polyprenyl-3-methyl-6-methoxy-1,4-benzoquinol (DMQH2). This is Ubiquinone/menaquinone biosynthesis C-methyltransferase UbiE from Bradyrhizobium sp. (strain BTAi1 / ATCC BAA-1182).